A 399-amino-acid polypeptide reads, in one-letter code: Elongation factor Tu (399 aa).

Positions 10-204 (KPHVNIGTIG…AVDASIPEPE (195 aa)) constitute a tr-type G domain. A G1 region spans residues 19–26 (GHVDHGKT). A GTP-binding site is contributed by 19–26 (GHVDHGKT). Residue Thr-26 coordinates Mg(2+). The G2 stretch occupies residues 60–64 (GITIN). The segment at 81-84 (DCPG) is G3. GTP-binding positions include 81–85 (DCPGH) and 136–139 (NKCD). Residues 136–139 (NKCD) are G4. The interval 174–176 (SGL) is G5.

This sequence belongs to the TRAFAC class translation factor GTPase superfamily. Classic translation factor GTPase family. EF-Tu/EF-1A subfamily. In terms of assembly, monomer.

The protein resides in the cytoplasm. The enzyme catalyses GTP + H2O = GDP + phosphate + H(+). Functionally, GTP hydrolase that promotes the GTP-dependent binding of aminoacyl-tRNA to the A-site of ribosomes during protein biosynthesis. The protein is Elongation factor Tu of Prochlorococcus marinus (strain NATL1A).